Reading from the N-terminus, the 280-residue chain is Para-Rep C2 (280 aa).

The CRESS-DNA virus Rep endonuclease domain occupies 1-97 (MARRYCFTLN…ETLISEIGIP (97 aa)). The short motif at 6 to 9 (CFTL) is the RCR-1 element. Positions 37 and 45 each coordinate a divalent metal cation. The short motif at 45-47 (HLQ) is the RCR-2 element. The Nuclear localization signal motif lies at 54 to 75 (NKIRLGGLKKKFGNRAHWEIAR). Residue tyrosine 84 is the For DNA cleavage activity of the active site. Residues 84–87 (YCCK) carry the RCR-3 motif. Positions 97–103 (PVMKGSN) match the Nuclear localization signal motif. 172–180 (GSDGGEGKT) lines the ATP pocket.

This sequence belongs to the nanoviridea/circoviridae replication-associated protein family. Homooligomer (Potential). Rep binds to repeated DNA motifs (iterons). Mg(2+) is required as a cofactor. The cofactor is Mn(2+).

Its subcellular location is the host nucleus. The catalysed reaction is ATP + H2O = ADP + phosphate + H(+). In terms of biological role, initiates and terminates the replication only of its own subviral DNA molecule. The closed circular ssDNA genome is first converted to a superhelical dsDNA. Rep binds a specific hairpin at the genome origin of replication. Introduces an endonucleolytic nick within the intergenic region of the genome, thereby initiating the rolling circle replication (RCR). Following cleavage, binds covalently to the 5'-phosphate of DNA as a tyrosyl ester. The cleavage gives rise to a free 3'-OH that serves as a primer for the cellular DNA polymerase. The polymerase synthesizes the (+) strand DNA by rolling circle mechanism. After one round of replication, a Rep-catalyzed nucleotidyl transfer reaction releases a circular single-stranded virus genome, thereby terminating the replication. Displays origin-specific DNA cleavage, nucleotidyl transferase, ATPase and helicase activities. The sequence is that of Para-Rep C2 (C2) from Subterranean clover stunt C2 alphasatellite (SCSC2A).